Reading from the N-terminus, the 373-residue chain is MPGWSCLVTGAGGFLGQRIVRMLVQEEELQEIRALFRTFGRKHEEELSKLQTKAKVRVLKGDILDAQCLKRACQGMSAVIHTAAAIDPLGAASRQTILDVNLKGTQLLLDACVEASVPTFIYSSSVLVAGPNSYKEIILNAHEEEHRESTWPNPYPYSKRMAEKAVLATNGRLLKNGGTLHTCALRLPFIYGEECQVTSTTVKTALKNNSIIKKNATFSIANPVYVGNAAWAHILAARSLQDPKKSPSIQGQFYYISDNTPHQSYDDLNYTLSKEWGLCLDSGWSLPLSLLYWLAFLLETVSFLLRPVYNYRPPFNRLLITVLNSVFTISYKKAQRDLGYQPLVSWEEAKQKTSEWIGTLVKQHRETLHKKSQ.

NADP(+) contacts are provided by residues 10 to 15, Y155, and K159; that span reads GAGGFL. The active-site Proton donor is the K159. A helical membrane pass occupies residues 288-308; sequence LSLLYWLAFLLETVSFLLRPV. An N6-acetyllysine modification is found at K350.

Belongs to the 3-beta-HSD family. Expressed in the male liver, starting in late puberty.

The protein localises to the endoplasmic reticulum membrane. Its subcellular location is the mitochondrion membrane. It carries out the reaction a 3beta-hydroxysteroid + NADP(+) = a 3-oxosteroid + NADPH + H(+). The enzyme catalyses 5alpha-androstane-3beta,17beta-diol + NADP(+) = 17beta-hydroxy-5alpha-androstan-3-one + NADPH + H(+). The protein operates within steroid metabolism. In terms of biological role, responsible for the reduction of the oxo group on the C-3 of 5alpha-androstane steroids. Catalyzes the conversion of dihydrotestosterone to its inactive form 5alpha-androstanediol, that does not bind androgen receptor/AR. Does not function as an isomerase. The polypeptide is NADPH-dependent 3-keto-steroid reductase Hsd3b5 (Mus musculus (Mouse)).